We begin with the raw amino-acid sequence, 26 residues long: Melittin (26 aa).

Residue Gly-1 is modified to N-formylglycine; partial. Residue Gln-26 is modified to Glutamine amide.

This sequence belongs to the melittin family. Monomer (in solution and for integration into membranes), homotetramer (in solution and potentially as a toroidal pore in membranes), and potenially homomultimer (as a toroidal pore in membranes). As to expression, expressed by the venom gland.

It is found in the secreted. It localises to the target cell membrane. In terms of biological role, main toxin of bee venom with strong hemolytic activity and antimicrobial activity. It has enhancing effects on bee venom phospholipase A2 activity. This amphipathic toxin binds to negatively charged membrane surface and forms pore by inserting into lipid bilayers inducing the leakage of ions and molecules and the enhancement of permeability that ultimately leads to cell lysis. It acts as a voltage-gated pore with higher selectivity for anions over cations. The ion conductance has been shown to be voltage-dependent. Self-association of melittin in membranes is promoted by high ionic strength, but not by the presence of negatively charged lipids. In vivo, intradermal injection into healthy human volunteers produce sharp pain sensation and an inflammatory response. It produces pain by activating primary nociceptor cells directly and indirectly due to its ability to activate plasma membrane phospholipase A2 and its pore-forming activity. This is Melittin (MELT) from Apis florea (Dwarf honeybee).